An 838-amino-acid chain; its full sequence is Major vault protein (838 aa).

MVP repeat units follow at residues 13-52 (VHIL…VVPP), 53-114 (RFYC…FKLK), 118-170 (VNTG…HIIS), 171-223 (PNTA…ITLT), 224-278 (DTEA…IVLN), 280-328 (KEYC…NVVS), 329-380 (KDQA…IALD), and 381-433 (KNEG…CMSE).

In terms of assembly, the vault ribonucleoprotein particle is a huge (400 A x 670 A) cage structure of 12.9 MDa. It consists of a dimer of half-vaults, with each half-vault comprising 39 identical major vault protein (MVP) chains, PARP4 and one or more vault RNAs (vRNAs).

Its subcellular location is the cytoplasm. It is found in the nucleus. Functionally, required for normal vault structure. Vaults are multi-subunit structures that may act as scaffolds for proteins involved in signal transduction. Vaults may also play a role in nucleo-cytoplasmic transport. The chain is Major vault protein from Trypanosoma cruzi (strain CL Brener).